Reading from the N-terminus, the 242-residue chain is Triosephosphate isomerase (242 aa).

Position 8–10 (8–10 (NWK)) interacts with substrate. The Electrophile role is filled by His-98. The active-site Proton acceptor is Glu-167. Substrate is bound by residues Gly-173, Ser-205, and 226 to 227 (GG).

Belongs to the triosephosphate isomerase family. In terms of assembly, homodimer.

It localises to the cytoplasm. The catalysed reaction is D-glyceraldehyde 3-phosphate = dihydroxyacetone phosphate. The protein operates within carbohydrate biosynthesis; gluconeogenesis. Its pathway is carbohydrate degradation; glycolysis; D-glyceraldehyde 3-phosphate from glycerone phosphate: step 1/1. Functionally, involved in the gluconeogenesis. Catalyzes stereospecifically the conversion of dihydroxyacetone phosphate (DHAP) to D-glyceraldehyde-3-phosphate (G3P). The chain is Triosephosphate isomerase from Mesomycoplasma hyopneumoniae (strain 7448) (Mycoplasma hyopneumoniae).